Here is a 161-residue protein sequence, read N- to C-terminus: Protein UXT homolog (161 aa).

This sequence belongs to the UXT family.

The sequence is that of Protein UXT homolog from Dictyostelium discoideum (Social amoeba).